We begin with the raw amino-acid sequence, 378 residues long: Plant intracellular Ras-group-related LRR protein 8 (378 aa).

Positions 10–86 (PTITVQVKFG…VMLMASQGLH (77 aa)) constitute a Ubiquitin-like domain. Residues 85–120 (LHQGDGPITKNSSVPAPSTRRASNVKEAQIQKSDTN) form a disordered region. Polar residues predominate over residues 93 to 106 (TKNSSVPAPSTRRA). LRR repeat units follow at residues 129–152 (WKAT…VWGC), 153–176 (GSSI…IAAL), 178–201 (SLQK…GLTC), 202–225 (VQTL…LGSI), 226–250 (THLR…LLKH), 252–271 (EILI…IGGC), 272–293 (ESLN…AFGN), 294–317 (LQHL…FFIK), and 319–344 (SQLI…GWEE).

The protein belongs to the SHOC2 family. Widely expressed except in panicles.

Leucine-rich repeat protein that likely mediates protein interactions, possibly in the context of signal transduction. This Oryza sativa subsp. japonica (Rice) protein is Plant intracellular Ras-group-related LRR protein 8 (IRL8).